The sequence spans 375 residues: ORC1-type DNA replication protein 3 (375 aa).

Residues 66–70, Tyr209, and Arg221 contribute to the ATP site; that span reads TGKTT.

This sequence belongs to the CDC6/cdc18 family.

In terms of biological role, involved in regulation of DNA replication. This is ORC1-type DNA replication protein 3 (cdc6c) from Haloarcula marismortui (strain ATCC 43049 / DSM 3752 / JCM 8966 / VKM B-1809) (Halobacterium marismortui).